We begin with the raw amino-acid sequence, 156 residues long: Ecotin (156 aa).

The N-terminal stretch at 1 to 19 (MKALLIAAGVAALSSTAMA) is a signal peptide. A disulfide bridge connects residues Cys65 and Cys102.

This sequence belongs to the protease inhibitor I11 (ecotin) family. Homodimer.

Its subcellular location is the periplasm. In terms of biological role, general inhibitor of family S1 serine proteases. The protein is Ecotin of Pseudomonas aeruginosa (strain UCBPP-PA14).